A 166-amino-acid polypeptide reads, in one-letter code: NAD(P)H-quinone oxidoreductase subunit I, chloroplastic (166 aa).

2 4Fe-4S ferredoxin-type domains span residues 55–84 (GRIHFEFDKCIACEVCVRVCPIDLPVVDWK) and 95–124 (LNYSIDFGICIFCGNCVEYCPTNCLSMTEE). Residues Cys64, Cys67, Cys70, Cys74, Cys104, Cys107, Cys110, and Cys114 each coordinate [4Fe-4S] cluster.

Belongs to the complex I 23 kDa subunit family. NDH is composed of at least 16 different subunits, 5 of which are encoded in the nucleus. The cofactor is [4Fe-4S] cluster.

The protein localises to the plastid. It is found in the chloroplast thylakoid membrane. It catalyses the reaction a plastoquinone + NADH + (n+1) H(+)(in) = a plastoquinol + NAD(+) + n H(+)(out). The catalysed reaction is a plastoquinone + NADPH + (n+1) H(+)(in) = a plastoquinol + NADP(+) + n H(+)(out). In terms of biological role, NDH shuttles electrons from NAD(P)H:plastoquinone, via FMN and iron-sulfur (Fe-S) centers, to quinones in the photosynthetic chain and possibly in a chloroplast respiratory chain. The immediate electron acceptor for the enzyme in this species is believed to be plastoquinone. Couples the redox reaction to proton translocation, and thus conserves the redox energy in a proton gradient. The protein is NAD(P)H-quinone oxidoreductase subunit I, chloroplastic of Marshallia caespitosa (Barbara's buttons).